Reading from the N-terminus, the 1228-residue chain is Minor fimbrium subunit Mfa5 (1228 aa).

The N-terminal stretch at 1-25 (MMKRYTIILAVFLLFCTVFTFQIKA) is a signal peptide. The 124-residue stretch at 144–267 (DVVMVIDQSS…QYPVKNVTTA (124 aa)) folds into the VWFA domain.

In terms of assembly, minor fimbriae are composed of a structural subunit, most often Mfa1, and the accessory subunits Mfa3, Mfa4 and Mfa5. Fimbrium assembly occurs by linear, head-to-tail oligomerization of fimbrial subunits. This is mediated via insertion of a C-terminal beta-strand from one subunit into a groove in the N-terminal domain of the following subunit.

Its subcellular location is the fimbrium. Accessory subunit of the minor fimbriae. These filamentous pili are attached to the cell surface; they mediate biofilm formation, adhesion onto host cells and onto other bacteria that are part of the oral microbiome. They play an important role in invasion of periodontal tissues and are recognized as major virulence factors. Fimbrium subunits from different strains have highly divergent sequences, and this correlates with pathogenicity. The polypeptide is Minor fimbrium subunit Mfa5 (Porphyromonas gingivalis (strain ATCC 33277 / DSM 20709 / CIP 103683 / JCM 12257 / NCTC 11834 / 2561)).